The chain runs to 514 residues: 2,3-bisphosphoglycerate-independent phosphoglycerate mutase (514 aa).

2 residues coordinate Mn(2+): aspartate 14 and serine 64. The active-site Phosphoserine intermediate is the serine 64. Residues histidine 125, arginine 155 to aspartate 156, arginine 187, arginine 193, arginine 263 to arginine 266, and lysine 336 contribute to the substrate site. The Mn(2+) site is built by aspartate 403, histidine 407, aspartate 444, histidine 445, and histidine 463.

Belongs to the BPG-independent phosphoglycerate mutase family. As to quaternary structure, monomer. The cofactor is Mn(2+).

It carries out the reaction (2R)-2-phosphoglycerate = (2R)-3-phosphoglycerate. It functions in the pathway carbohydrate degradation; glycolysis; pyruvate from D-glyceraldehyde 3-phosphate: step 3/5. In terms of biological role, catalyzes the interconversion of 2-phosphoglycerate and 3-phosphoglycerate. The polypeptide is 2,3-bisphosphoglycerate-independent phosphoglycerate mutase (Shewanella putrefaciens (strain CN-32 / ATCC BAA-453)).